We begin with the raw amino-acid sequence, 218 residues long: Stress response regulator protein 1 (218 aa).

Residues 90-209 (RFLLVDDNSI…YRVVLDVVDN (120 aa)) enclose the Response regulatory domain. Asp-142 carries the 4-aspartylphosphate modification.

Required for stress adaptation, morphogenesis and virulence. In Meyerozyma guilliermondii (strain ATCC 6260 / CBS 566 / DSM 6381 / JCM 1539 / NBRC 10279 / NRRL Y-324) (Yeast), this protein is Stress response regulator protein 1 (SRR1).